The sequence spans 192 residues: Interleukin-18 (192 aa).

Residues Met-1–Asp-35 constitute a propeptide that is removed on maturation.

Belongs to the IL-1 family. As to quaternary structure, forms a ternary complex with ligand-binding receptor subunit IL18R1 and signaling receptor subunit IL18RAP at the plasma membrane. Mature IL18 first binds to IL18R1 forming a low affinity binary complex, which then interacts with IL18RAP to form a high affinity ternary complex that signals inside the cell. Interacts with cargo receptor TMED10; the interaction mediates the translocation from the cytoplasm into the ERGIC (endoplasmic reticulum-Golgi intermediate compartment) and thereby secretion. Post-translationally, the pro-IL-18 precursor is processed by CASP1, CASP4 or CASP5 to yield its mature, active form. The pro-IL-18 precursor features autoinhibitory interactions between the propeptide and the post-cleavage-site region, preventing recognition by the IL18R1 receptor. Processing by CASP1, CASP4 or CASP5 induces conformational changes to generate critical receptor-binding sites. The mature form is then secreted and released in the extracellular milieu by passing through the gasdermin-D (GSDMD) pore. In contrast, cleavage by CASP3 inactivates IL18.

The protein localises to the cytoplasm. Its subcellular location is the cytosol. The protein resides in the secreted. Pro-inflammatory cytokine primarily involved in epithelial barrier repair, polarized T-helper 1 (Th1) cell and natural killer (NK) cell immune responses. Upon binding to IL18R1 and IL18RAP, forms a signaling ternary complex which activates NF-kappa-B, triggering synthesis of inflammatory mediators. Synergizes with IL12/interleukin-12 to induce IFNG synthesis from T-helper 1 (Th1) cells and natural killer (NK) cells. Involved in transduction of inflammation downstream of pyroptosis: its mature form is specifically released in the extracellular milieu by passing through the gasdermin-D (GSDMD) pore. The chain is Interleukin-18 (IL18) from Felis catus (Cat).